The following is a 444-amino-acid chain: ATP-dependent protease ATPase subunit HslU (444 aa).

ATP contacts are provided by residues Val18, 60 to 65, Asp258, Glu323, and Arg395; that span reads GVGKTE.

It belongs to the ClpX chaperone family. HslU subfamily. In terms of assembly, a double ring-shaped homohexamer of HslV is capped on each side by a ring-shaped HslU homohexamer. The assembly of the HslU/HslV complex is dependent on binding of ATP.

Its subcellular location is the cytoplasm. In terms of biological role, ATPase subunit of a proteasome-like degradation complex; this subunit has chaperone activity. The binding of ATP and its subsequent hydrolysis by HslU are essential for unfolding of protein substrates subsequently hydrolyzed by HslV. HslU recognizes the N-terminal part of its protein substrates and unfolds these before they are guided to HslV for hydrolysis. This Thioalkalivibrio sulfidiphilus (strain HL-EbGR7) protein is ATP-dependent protease ATPase subunit HslU.